A 78-amino-acid chain; its full sequence is Large ribosomal subunit protein bL28 (78 aa).

Belongs to the bacterial ribosomal protein bL28 family.

This Pectobacterium carotovorum subsp. carotovorum (strain PC1) protein is Large ribosomal subunit protein bL28.